Here is a 146-residue protein sequence, read N- to C-terminus: 3-hydroxyacyl-[acyl-carrier-protein] dehydratase FabZ (146 aa).

H49 is a catalytic residue.

This sequence belongs to the thioester dehydratase family. FabZ subfamily.

Its subcellular location is the cytoplasm. It catalyses the reaction a (3R)-hydroxyacyl-[ACP] = a (2E)-enoyl-[ACP] + H2O. Involved in unsaturated fatty acids biosynthesis. Catalyzes the dehydration of short chain beta-hydroxyacyl-ACPs and long chain saturated and unsaturated beta-hydroxyacyl-ACPs. In Wolbachia sp. subsp. Brugia malayi (strain TRS), this protein is 3-hydroxyacyl-[acyl-carrier-protein] dehydratase FabZ.